The following is a 645-amino-acid chain: Acetyl-coenzyme A synthetase 2 (645 aa).

Residues 190–193, T308, and N332 contribute to the CoA site; that span reads RGGK. Residues 384–386, 408–413, D497, and R512 each bind ATP; these read GEP and DTWWQT. S520 lines the CoA pocket. R523 is a binding site for ATP. V534, H536, and V539 together coordinate Mg(2+). Position 606 is an N6-acetyllysine (K606).

It belongs to the ATP-dependent AMP-binding enzyme family. Mg(2+) serves as cofactor. In terms of processing, acetylated. Deacetylation by the SIR2-homolog deacetylase activates the enzyme.

It carries out the reaction acetate + ATP + CoA = acetyl-CoA + AMP + diphosphate. Its function is as follows. Catalyzes the conversion of acetate into acetyl-CoA (AcCoA), an essential intermediate at the junction of anabolic and catabolic pathways. AcsA undergoes a two-step reaction. In the first half reaction, AcsA combines acetate with ATP to form acetyl-adenylate (AcAMP) intermediate. In the second half reaction, it can then transfer the acetyl group from AcAMP to the sulfhydryl group of CoA, forming the product AcCoA. This Pseudomonas aeruginosa (strain ATCC 15692 / DSM 22644 / CIP 104116 / JCM 14847 / LMG 12228 / 1C / PRS 101 / PAO1) protein is Acetyl-coenzyme A synthetase 2.